Consider the following 471-residue polypeptide: Ribulose bisphosphate carboxylase large chain (471 aa).

Substrate is bound by residues Asn115 and Thr165. Lys167 (proton acceptor) is an active-site residue. Lys169 contributes to the substrate binding site. Lys193, Asp195, and Glu196 together coordinate Mg(2+). Lys193 carries the N6-carboxylysine modification. His286 serves as the catalytic Proton acceptor. Substrate is bound by residues Arg287, His319, and Ser371.

Belongs to the RuBisCO large chain family. Type I subfamily. As to quaternary structure, heterohexadecamer of 8 large chains and 8 small chains. The cofactor is Mg(2+).

Its subcellular location is the carboxysome. The enzyme catalyses 2 (2R)-3-phosphoglycerate + 2 H(+) = D-ribulose 1,5-bisphosphate + CO2 + H2O. It carries out the reaction D-ribulose 1,5-bisphosphate + O2 = 2-phosphoglycolate + (2R)-3-phosphoglycerate + 2 H(+). Functionally, ruBisCO catalyzes two reactions: the carboxylation of D-ribulose 1,5-bisphosphate, the primary event in carbon dioxide fixation, as well as the oxidative fragmentation of the pentose substrate in the photorespiration process. Both reactions occur simultaneously and in competition at the same active site. The protein is Ribulose bisphosphate carboxylase large chain of Prochlorococcus marinus (strain MIT 9515).